We begin with the raw amino-acid sequence, 179 residues long: Replication restart protein DnaT (179 aa).

The tract at residues 156 to 179 (GGLPKRDVNTVSEPDSQIPPGFRG) is disordered.

The protein belongs to the DnaT family. Homooligomerizes. Interacts with PriB. Component of the replication restart primosome. Primosome assembly occurs via a 'hand-off' mechanism. PriA binds to replication forks, subsequently PriB then DnaT bind; DnaT then displaces ssDNA to generate the helicase loading substrate.

Its function is as follows. Involved in the restart of stalled replication forks, which reloads the replicative helicase on sites other than the origin of replication. Can function in multiple replication restart pathways. Displaces ssDNA from a PriB-ssDNA complex. Probably forms a spiral filament on ssDNA. This is Replication restart protein DnaT from Escherichia coli O17:K52:H18 (strain UMN026 / ExPEC).